The following is a 287-amino-acid chain: Pyridoxal kinase PdxY (287 aa).

Substrate-binding positions include Ser10 and 45–46 (TQ). Residues Asp112, Ala144, Glu149, Lys182, and 209 to 212 (RPLV) contribute to the ATP site. Substrate is bound at residue Asp224.

Belongs to the pyridoxine kinase family. PdxY subfamily. Homodimer. The cofactor is Mg(2+).

It carries out the reaction pyridoxal + ATP = pyridoxal 5'-phosphate + ADP + H(+). Its pathway is cofactor metabolism; pyridoxal 5'-phosphate salvage; pyridoxal 5'-phosphate from pyridoxal: step 1/1. Pyridoxal kinase involved in the salvage pathway of pyridoxal 5'-phosphate (PLP). Catalyzes the phosphorylation of pyridoxal to PLP. The protein is Pyridoxal kinase PdxY of Escherichia coli (strain UTI89 / UPEC).